A 130-amino-acid polypeptide reads, in one-letter code: Small ribosomal subunit protein uS11c (130 aa).

The protein belongs to the universal ribosomal protein uS11 family. As to quaternary structure, part of the 30S ribosomal subunit.

It is found in the plastid. Its subcellular location is the chloroplast. The protein is Small ribosomal subunit protein uS11c of Physcomitrium patens (Spreading-leaved earth moss).